A 416-amino-acid polypeptide reads, in one-letter code: Gamma-glutamyl phosphate reductase (416 aa).

Belongs to the gamma-glutamyl phosphate reductase family.

It is found in the cytoplasm. The catalysed reaction is L-glutamate 5-semialdehyde + phosphate + NADP(+) = L-glutamyl 5-phosphate + NADPH + H(+). It functions in the pathway amino-acid biosynthesis; L-proline biosynthesis; L-glutamate 5-semialdehyde from L-glutamate: step 2/2. Functionally, catalyzes the NADPH-dependent reduction of L-glutamate 5-phosphate into L-glutamate 5-semialdehyde and phosphate. The product spontaneously undergoes cyclization to form 1-pyrroline-5-carboxylate. The polypeptide is Gamma-glutamyl phosphate reductase (Actinobacillus succinogenes (strain ATCC 55618 / DSM 22257 / CCUG 43843 / 130Z)).